The following is a 528-amino-acid chain: Ladinin-1 (528 aa).

The interval 1–404 (MSVSRKDWSA…NSETPLTRSA (404 aa)) is disordered. A phosphoserine mark is found at serine 38, serine 56, serine 62, serine 72, and serine 76. Over residues 88–97 (RTRKERRQRR) the composition is skewed to basic residues. A Phosphoserine modification is found at serine 119. A compositionally biased stretch (basic and acidic residues) spans 134 to 173 (KKVEALPRRRLSREQRGPWAQDEERLKNRELAEGEKRLPE). SEK repeat units follow at residues 184 to 186 (SEK), 190 to 192 (SEK), 202 to 204 (SEK), and 208 to 210 (SEK). A 6 X SEK repeats region spans residues 184–281 (SEKTPVSEKT…MQERKLVSEK (98 aa)). Basic and acidic residues-rich tracts occupy residues 218–231 (SLTE…KLVP) and 267–279 (IVSE…KLVS). SEK repeat units lie at residues 269–271 (SEK) and 279–281 (SEK). The span at 304-316 (EQPQTTGGSQATT) shows a compositional bias: polar residues. A phosphoserine mark is found at serine 328, serine 358, serine 367, serine 405, and serine 496. The span at 365–377 (TPSPTLLTYSSSL) shows a compositional bias: low complexity. A disordered region spans residues 492–528 (KTQDSGDHGSQEVRKEASVTKRAQWGSKPSTSLDAEV). The segment covering 495–510 (DSGDHGSQEVRKEASV) has biased composition (basic and acidic residues). Residues 518–528 (SKPSTSLDAEV) are compositionally biased toward polar residues.

As to expression, expressed in kidney, lung and keratinocytes followed by liver, spleen and brain. Not expressed in testis, skeletal and heart muscle and in fibroblasts.

The protein localises to the secreted. It is found in the extracellular space. It localises to the extracellular matrix. Its subcellular location is the basement membrane. Functionally, anchoring filament protein which is a component of the basement membrane zone. In Mus musculus (Mouse), this protein is Ladinin-1 (Lad1).